The following is a 240-amino-acid chain: Zein-alpha 19C2 (240 aa).

Residues 1–21 (MATKIFSLLMLLALSTCVANA) form the signal peptide.

Belongs to the zein family. As to quaternary structure, interacts with OP10 (via N-terminus).

In terms of biological role, zeins are major seed storage proteins. This chain is Zein-alpha 19C2, found in Zea mays (Maize).